A 356-amino-acid polypeptide reads, in one-letter code: Guanine nucleotide-binding protein alpha-17 subunit (356 aa).

The N-myristoyl glycine moiety is linked to residue Gly2. Cys4 carries S-palmitoyl cysteine lipidation. Positions 32–356 (SIVKLLLLGA…QKNLQKAGMM (325 aa)) constitute a G-alpha domain. Residues 35–48 (KLLLLGAGECGKST) are G1 motif. GTP is bound by residues 40–47 (GAGECGKS), 177–183 (LYSRVAT), 202–206 (DVGGQ), 271–274 (NKKD), and Ala328. Residues Ser47 and Thr183 each coordinate Mg(2+). Residues 175–183 (DILYSRVAT) are G2 motif. The segment at 198-207 (FRVFDVGGQR) is G3 motif. The G4 motif stretch occupies residues 267-274 (ILFMNKKD). Residues 326–331 (TCATDT) are G5 motif.

It belongs to the G-alpha family. G proteins are composed of 3 units; alpha, beta and gamma. The alpha chain contains the guanine nucleotide binding site. As to expression, expressed in sensory neurons in the head and tail. Expressed in amphid AWC neurons, to a lesser extent in AWB and weakly in AWA, ASH and ADF neurons (head sensory neurons). Expressed in phasmid PHA and PHB neurons (tail sensory neurons).

The protein resides in the cell projection. It localises to the cilium. It is found in the dendrite. In terms of biological role, guanine nucleotide-binding proteins (G proteins) are involved as modulators or transducers in various transmembrane signaling systems. This specific G-alpha subunit plays an important role in olfaction and in cilia morphogenesis. Involved in chemotactic responses to attractants diacetyl, pyrazine, 2,4,5-trimethylthiazole, benzaldehyde, isoamyl alcohol, butanone and 2,3-pentanedione. Displays a redundant function with gpa-3 in chemotactic responses. Plays a role in the avoidance response to the noxious chemical quinine in ASH sensory neurons. Involved in avoidance responses to copper, sodium dodecyl sulfate and linoleic acid. Involved in osmotic avoidance and mechanosensory responses. Involved in specifying fan-like morphology of cilia of head sensory neurons AWC. Plays a role in the detection of preferred food sources by mediating the recognition of food odors in olfactory sensory neurons. This is Guanine nucleotide-binding protein alpha-17 subunit from Caenorhabditis elegans.